The chain runs to 58 residues: uncharacterized protein (58 aa).

Its subcellular location is the plastid. The protein localises to the chloroplast. This is an uncharacterized protein from Pyropia yezoensis (Susabi-nori).